The following is a 360-amino-acid chain: Peptide chain release factor 1 (360 aa).

N5-methylglutamine is present on Gln-235. Residues 284 to 295 (ERQEQAQADTRR) show a composition bias toward basic and acidic residues. The tract at residues 284–309 (ERQEQAQADTRRNLLGSGDRSDKIRT) is disordered.

It belongs to the prokaryotic/mitochondrial release factor family. Post-translationally, methylated by PrmC. Methylation increases the termination efficiency of RF1.

Its subcellular location is the cytoplasm. In terms of biological role, peptide chain release factor 1 directs the termination of translation in response to the peptide chain termination codons UAG and UAA. In Pasteurella multocida (strain Pm70), this protein is Peptide chain release factor 1 (prfA).